Reading from the N-terminus, the 238-residue chain is ATP synthase subunit O, mitochondrial (238 aa).

Residues Met-1 to Tyr-36 constitute a mitochondrion transit peptide. Thr-90 carries the post-translational modification Phosphothreonine.

Belongs to the ATPase delta chain family. In terms of assembly, F-type ATPases have 2 components, CF(1) - the catalytic core - and CF(0) - the membrane proton channel. CF(1) has five subunits: alpha(3), beta(3), gamma(1), delta(1), epsilon(1). CF(0) has three main subunits: a, b and c.

Its subcellular location is the mitochondrion. It localises to the mitochondrion inner membrane. In terms of biological role, mitochondrial membrane ATP synthase (F(1)F(0) ATP synthase or Complex V) produces ATP from ADP in the presence of a proton gradient across the membrane which is generated by electron transport complexes of the respiratory chain. F-type ATPases consist of two structural domains, F(1) - containing the extramembraneous catalytic core and F(0) - containing the membrane proton channel, linked together by a central stalk and a peripheral stalk. During catalysis, ATP synthesis in the catalytic domain of F(1) is coupled via a rotary mechanism of the central stalk subunits to proton translocation. Part of the complex F(0) domain and the peripheric stalk, which acts as a stator to hold the catalytic alpha(3)beta(3) subcomplex and subunit a/ATP6 static relative to the rotary elements. The sequence is that of ATP synthase subunit O, mitochondrial from Arabidopsis thaliana (Mouse-ear cress).